An 88-amino-acid chain; its full sequence is Small ribosomal subunit protein bS20 (88 aa).

Disordered stretches follow at residues 1 to 23 (MANTTSAKKATRKIARRSAVNKA) and 65 to 88 (GVMHSNTASRKVSRLAQRVKSLSA).

This sequence belongs to the bacterial ribosomal protein bS20 family.

In terms of biological role, binds directly to 16S ribosomal RNA. This Rhizobium meliloti (strain 1021) (Ensifer meliloti) protein is Small ribosomal subunit protein bS20.